The chain runs to 318 residues: Esterase FVEG_12639 (318 aa).

Active-site residues include Ser156, Asp255, and His285.

It belongs to the AB hydrolase 3 family.

Its function is as follows. Esterase; part of the Fusarium detoxification of benzoxazolinone cluster 2 (FDB2) involved in the degradation of benzoxazolinones produced by the host plant. Maize, wheat, and rye produce the 2 benzoxazinone phytoanticipins 2,4-dihy-droxy-7-methoxy-1,4-benzoxazin-3-one (DIMBOA) and 2,4-dihydroxy-1,4-benzoxazin-3-one (DIBOA) that, due to their inherent instability once released, spontaneously degrade to the more stable corresponding benzoxazolinones, 6-methoxy-2-benzoxazolinone (MBOA) and 2-benzoxazolinone (BOA), respectively. The first step in the detoxification of benzoxazolinones involves the hydrolysis of the cyclic ester bond of benzoxazolinones by the FDB1 cluster gamma-lactamase MBL1 to aminophenols. MBL1 is able to convert BOA into 2-aminophenol (2-AP), as well as MBOA into 5-methoxy-2-aminophenol (2-AMP). The FDB2 cluster N-malonyltransferase FDB2/NAT1 then metabolizes aminophenols via N-malonylation to non-toxic malonamic acids. FDB2/NAT1 converts 2-AP into N-(2-hydroxyphenyl) malonamic acid (HPMA) and 2-AMP into N-(2-hydroxy-4-methoxyphenyl) malonamic acid (HMPMA). The duplicated dienlactone hydrolases DLH1 and DLH2 may provide redundant function for hydrolyzing the lactone moiety in the BOA molecule. The roles of the amidases an other enzymes encoded by the 2 FDB clusters have not been identified so far. This chain is Esterase FVEG_12639, found in Gibberella moniliformis (strain M3125 / FGSC 7600) (Maize ear and stalk rot fungus).